The chain runs to 502 residues: Probable glycine dehydrogenase (decarboxylating) subunit 2 (502 aa).

K273 is modified (N6-(pyridoxal phosphate)lysine).

Belongs to the GcvP family. C-terminal subunit subfamily. The glycine cleavage system is composed of four proteins: P, T, L and H. In this organism, the P 'protein' is a heterodimer of two subunits. Requires pyridoxal 5'-phosphate as cofactor.

The catalysed reaction is N(6)-[(R)-lipoyl]-L-lysyl-[glycine-cleavage complex H protein] + glycine + H(+) = N(6)-[(R)-S(8)-aminomethyldihydrolipoyl]-L-lysyl-[glycine-cleavage complex H protein] + CO2. In terms of biological role, the glycine cleavage system catalyzes the degradation of glycine. The P protein binds the alpha-amino group of glycine through its pyridoxal phosphate cofactor; CO(2) is released and the remaining methylamine moiety is then transferred to the lipoamide cofactor of the H protein. This Thermococcus kodakarensis (strain ATCC BAA-918 / JCM 12380 / KOD1) (Pyrococcus kodakaraensis (strain KOD1)) protein is Probable glycine dehydrogenase (decarboxylating) subunit 2.